The primary structure comprises 559 residues: MDIKRTILWVIFSMSLVLLYDNWQRANGHASMFFPSTTQQQAASAPAASGAAAQGDVPKANVQPATGTSAAPAAGAAPQAAAQPTGEKIVVTTDTVRAEIDTAGGIVSRLELLKEHEKDGKPVVLFERDNVRTYMARSGLIGGDLPNHTTVFTAAPGPRALDGAEQVQVVLTGEKNGVKLVKTYTFRKGSYVVDSKFDVTNAGTAPVSPTLYLELARDGSKVEQSQFYSTFTGPAIYTDADKYHKLSFEDIAKGKATVPAAANNGWVAMVQHYFASAWIPQTGKEHSFYVQQIDPNLYRVGIQQPLGELAPGATVSTDARLFAGPQEEHMLEKIAPGLELVKDYGWLTILAKPLFWLLEKLHGFLGNWGWSIIALTVLIKLVFFPLSAASYKSMGKMKDLQPRMTSIRERYKNDPQKMNQEMMALYRTEKVNPLGGCLPIVIQIPVFIALYWVLLSSVEMRGAPWLGWIHDLSVPDPFYILPIVMAVSMFVQTKLNPTPPDPVQAKVMMIMPLVFSVMFFFFPAGLVLYWVVNNILSIAQQWQINRMLGKGKAAVVAKS.

Residues 7-24 (ILWVIFSMSLVLLYDNWQ) traverse the membrane as a helical segment. Composition is skewed to low complexity over residues 45–55 (APAASGAAAQG) and 63–82 (QPAT…QAAA). A disordered region spans residues 45–82 (APAASGAAAQGDVPKANVQPATGTSAAPAAGAAPQAAA). 5 consecutive transmembrane segments (helical) span residues 338–358 (LELV…FWLL), 364–384 (FLGN…LVFF), 434–454 (LGGC…YWVL), 472–492 (LSVP…MFVQ), and 507–527 (VMMI…AGLV).

Belongs to the OXA1/ALB3/YidC family. Type 1 subfamily. Interacts with the Sec translocase complex via SecD. Specifically interacts with transmembrane segments of nascent integral membrane proteins during membrane integration.

It localises to the cell inner membrane. In terms of biological role, required for the insertion and/or proper folding and/or complex formation of integral membrane proteins into the membrane. Involved in integration of membrane proteins that insert both dependently and independently of the Sec translocase complex, as well as at least some lipoproteins. Aids folding of multispanning membrane proteins. This is Membrane protein insertase YidC from Cupriavidus taiwanensis (strain DSM 17343 / BCRC 17206 / CCUG 44338 / CIP 107171 / LMG 19424 / R1) (Ralstonia taiwanensis (strain LMG 19424)).